A 257-amino-acid polypeptide reads, in one-letter code: Large ribosomal subunit protein uL3 (257 aa).

Glutamine 151 is subject to N5-methylglutamine. The disordered stretch occupies residues tyrosine 218–serine 257. The span at alanine 225–proline 236 shows a compositional bias: low complexity.

Belongs to the universal ribosomal protein uL3 family. In terms of assembly, part of the 50S ribosomal subunit. Forms a cluster with proteins L14 and L19. Post-translationally, methylated by PrmB.

Functionally, one of the primary rRNA binding proteins, it binds directly near the 3'-end of the 23S rRNA, where it nucleates assembly of the 50S subunit. This is Large ribosomal subunit protein uL3 from Sphingopyxis alaskensis (strain DSM 13593 / LMG 18877 / RB2256) (Sphingomonas alaskensis).